The primary structure comprises 700 residues: Auxin response factor 18 (700 aa).

The TF-B3 DNA-binding region spans 128 to 230; the sequence is FAKTLTQSDA…DLCVGIRRAK (103 aa). Disordered regions lie at residues 234–254 and 560–595; these read VGGP…AAGG and VKKS…DNLS. Residues 239-250 are compositionally biased toward pro residues; it reads FLPPPPPPPPTP. The segment covering 565-594 has biased composition (polar residues); the sequence is SDGNAENTVNKSNSDVSSPRSNQNGTTDNL. The region spanning 614-697 is the PB1 domain; the sequence is TGHCKVFMQS…NILTDTSGDN (84 aa).

Belongs to the ARF family. As to quaternary structure, homodimers and heterodimers. As to expression, expressed in roots, culms, leaves and young panicles.

It localises to the nucleus. Its function is as follows. Auxin response factors (ARFs) are transcriptional factors that bind specifically to the DNA sequence 5'-TGTCTC-3' found in the auxin-responsive promoter elements (AuxREs). The sequence is that of Auxin response factor 18 (ARF18) from Oryza sativa subsp. japonica (Rice).